Reading from the N-terminus, the 127-residue chain is Small ribosomal subunit protein uS11 (127 aa).

The protein belongs to the universal ribosomal protein uS11 family. In terms of assembly, part of the 30S ribosomal subunit. Interacts with proteins S7 and S18. Binds to IF-3.

In terms of biological role, located on the platform of the 30S subunit, it bridges several disparate RNA helices of the 16S rRNA. Forms part of the Shine-Dalgarno cleft in the 70S ribosome. The polypeptide is Small ribosomal subunit protein uS11 (Chlorobium phaeobacteroides (strain DSM 266 / SMG 266 / 2430)).